The sequence spans 374 residues: Chaperone protein DnaJ (374 aa).

One can recognise a J domain in the interval 6 to 71; sequence DYYAVLEVTR…QKRAAYDRFG (66 aa). A CR-type zinc finger spans residues 130–209; that stretch reads GVKKPITVPT…CHGAGTVERE (80 aa). Residues cysteine 143, cysteine 146, cysteine 161, cysteine 164, cysteine 183, cysteine 186, cysteine 197, and cysteine 200 each coordinate Zn(2+). CXXCXGXG motif repeat units follow at residues 143-150, 161-168, 183-190, and 197-204; these read CESCEGTG, CPTCHGAG, and CAACHGAG.

Belongs to the DnaJ family. Homodimer. It depends on Zn(2+) as a cofactor.

It localises to the cytoplasm. In terms of biological role, participates actively in the response to hyperosmotic and heat shock by preventing the aggregation of stress-denatured proteins and by disaggregating proteins, also in an autonomous, DnaK-independent fashion. Unfolded proteins bind initially to DnaJ; upon interaction with the DnaJ-bound protein, DnaK hydrolyzes its bound ATP, resulting in the formation of a stable complex. GrpE releases ADP from DnaK; ATP binding to DnaK triggers the release of the substrate protein, thus completing the reaction cycle. Several rounds of ATP-dependent interactions between DnaJ, DnaK and GrpE are required for fully efficient folding. Also involved, together with DnaK and GrpE, in the DNA replication of plasmids through activation of initiation proteins. This Gluconacetobacter diazotrophicus (strain ATCC 49037 / DSM 5601 / CCUG 37298 / CIP 103539 / LMG 7603 / PAl5) protein is Chaperone protein DnaJ.